The sequence spans 493 residues: MASGILVNVKEEVTCPICLELLTQPLSLDCGHSFCQACLTANHKKSTLDKGERSCPVCRVSYQPKNIRPNRHVANIVEKLREVKLSPEGQKVDHCARHGEKLLLFCKEDGKVICWLCERSQEHRGHHTFLTEEVAQKYQVKLQAALEMLRQKQQEAEELEADIREEKASWKTQIQYDKTSVLADFEQLRDILDWEESNELQNLEKEEEDILKSLTKSETEMVQQTQSVRELISDVEHRLQGSVMELLQGVDGIIKRMQNVTLKKPETFPKNQRRVFRAPNLKGMLEVFRELTDVRRYWVDVTVAPNDISYAVISEDMRQVSCPEPQITYGAQGTTYQTYVNFNYCTGILGSQSITSGKHYWEVNVSKKSAWILGVCAGFQPDAMYNIEQNENYQPQYGYWVIGLEEGVKCSAFQDGSFHNPSAPFIVPLSVIICPDRVGVFLDYEACTVSFFNITNHGFLIYKFSHCSFSQPVFPYLNPRKCRVPMTLCSPSS.

Position 2 is an N-acetylalanine (Ala-2). The segment at 15–59 adopts an RING-type zinc-finger fold; sequence CPICLELLTQPLSLDCGHSFCQACLTANHKKSTLDKGERSCPVCR. The residue at position 86 (Ser-86) is a Phosphoserine. The B box-type zinc finger occupies 90–132; the sequence is QKVDHCARHGEKLLLFCKEDGKVICWLCERSQEHRGHHTFLTE. Zn(2+) contacts are provided by Cys-95, His-98, Cys-117, and His-123. Residues 131–223 adopt a coiled-coil conformation; sequence TEEVAQKYQV…LTKSETEMVQ (93 aa). A required for interaction with GABARAP and for autophagy region spans residues 185 to 198; it reads FEQLRDILDWEESN. A B30.2/SPRY domain is found at 281–493; that stretch reads LKGMLEVFRE…VPMTLCSPSS (213 aa).

Belongs to the TRIM/RBCC family. In terms of assembly, can form homodimers and homotrimers. In addition to lower-order dimerization, also exhibits a higher-order multimerization and both low- and high-order multimerizations are essential for its restriction activity. Interacts with BTBD1 and BTBD2. Interacts with PSMC4, PSMC5, PSMD7 and HSPA8/HSC70. Interacts (via B30.2/SPRY domain) with HSPA1A/B. Interacts with PSMC2, MAP3K7/TAK1, TAB2 and TAB3. Interacts with SQSTM1. Interacts with TRIM6 and TRIM34. Interacts with ULK1 (phosphorylated form), GABARAP, GABARAPL1, GABARAPL2, MAP1LC3A, MAP1LC3C and BECN1. Post-translationally, degraded in a proteasome-independent fashion in the absence of viral infection but in a proteasome-dependent fashion following exposure to restriction sensitive virus. In terms of processing, autoubiquitinated in a RING finger- and UBE2D2-dependent manner. Monoubiquitinated by TRIM21. Deubiquitinated by Yersinia YopJ. Ubiquitination may not lead to proteasomal degradation.

The protein resides in the cytoplasm. It localises to the nucleus. It carries out the reaction S-ubiquitinyl-[E2 ubiquitin-conjugating enzyme]-L-cysteine + [acceptor protein]-L-lysine = [E2 ubiquitin-conjugating enzyme]-L-cysteine + N(6)-ubiquitinyl-[acceptor protein]-L-lysine.. Its pathway is protein modification; protein ubiquitination. Functionally, capsid-specific restriction factor that prevents infection from non-host-adapted retroviruses. Blocks viral replication early in the life cycle, after viral entry but before reverse transcription. In addition to acting as a capsid-specific restriction factor, also acts as a pattern recognition receptor that activates innate immune signaling in response to the retroviral capsid lattice. Binding to the viral capsid triggers its E3 ubiquitin ligase activity, and in concert with the heterodimeric ubiquitin conjugating enzyme complex UBE2V1-UBE2N (also known as UBC13-UEV1A complex) generates 'Lys-63'-linked polyubiquitin chains, which in turn are catalysts in the autophosphorylation of the MAP3K7/TAK1 complex (includes TAK1, TAB2, and TAB3). Activation of the MAP3K7/TAK1 complex by autophosphorylation results in the induction and expression of NF-kappa-B and MAPK-responsive inflammatory genes, thereby leading to an innate immune response in the infected cell. Plays a role in regulating autophagy through activation of autophagy regulator BECN1 by causing its dissociation from its inhibitors BCL2 and TAB2. In Pongo abelii (Sumatran orangutan), this protein is Tripartite motif-containing protein 5 (TRIM5).